The sequence spans 133 residues: MPEETLLAFDFGEKKIGIAIGNTLTRQARPLEIIFSETRAARFGRIGQLLQEWQPQRAVVGLPLTLDGQEQPASARARRFANQLHGHFGLAVELVDERSSSMEAQQLLGTHADDDAVAAAVILQRYLDTLSQP.

This sequence belongs to the YqgF nuclease family.

Its subcellular location is the cytoplasm. Could be a nuclease involved in processing of the 5'-end of pre-16S rRNA. This is Putative pre-16S rRNA nuclease from Bordetella pertussis (strain Tohama I / ATCC BAA-589 / NCTC 13251).